A 378-amino-acid chain; its full sequence is Virion membrane protein A16 (378 aa).

Residue Gly2 is the site of N-myristoyl glycine; by host attachment. Topologically, residues 2–342 (GAAVTLNRIK…VVKDKIKLPT (341 aa)) are virion surface. Residues 343 to 363 (WLGAAITLVVISVIFYFISIY) form a helical; Signal-anchor for type II membrane protein membrane-spanning segment. Residues 364–378 (SRPKIKTNDINVRRR) are Intravirion-facing.

The protein belongs to the poxviridae A16/G9/J5 family. As to quaternary structure, part of a stable entry-fusion complex (EFC) which is at least composed of proteins A16, A21, A28, G3, G9, H2, J5, and L5. Formation of the viral membrane is necessary for the assembly of the complex. Interacts with G9. Post-translationally, most cysteines are linked by disulfide bonds. They are created by the viral disulfide bond formation pathway, a poxvirus-specific redox pathway that operates on the cytoplasmic side of the MV membranes.

Its subcellular location is the virion membrane. Functionally, envelope protein part of the entry-fusion complex responsible for the virus membrane fusion with host cell membrane during virus entry. Also plays a role in cell-cell fusion (syncytium formation). The polypeptide is Virion membrane protein A16 (Oryctolagus cuniculus (Rabbit)).